Consider the following 508-residue polypeptide: General transcription factor IIF subunit 1 (508 aa).

A2 carries the N-acetylalanine modification. A Phosphothreonine modification is found at T156. Positions 177–448 (MQQRRLKDQD…SSGDVQVTED (272 aa)) are disordered. Residues S217, S218, S221, and S224 each carry the phosphoserine modification. Residues 232–251 (SKAKKKAPVTKAGRKKKKKK) show a composition bias toward basic residues. Acidic residues-rich tracts occupy residues 255-270 (DEAF…EGQE) and 303-325 (EQSE…EEEE). Residue T331 is modified to Phosphothreonine. Over residues 343-355 (DDSDSSEESDIDS) the composition is skewed to acidic residues. Basic residues predominate over residues 364 to 374 (AKKKTPPKRER). S377, S380, S381, and S385 each carry phosphoserine. The span at 378 to 388 (GGSSKGTSRPG) shows a compositional bias: polar residues. Position 389 is a phosphothreonine (T389). Residues 389-406 (TPSAEAASTSSTLRAAAS) show a composition bias toward low complexity. S391 is subject to Phosphoserine. An N6-acetyllysine modification is found at K407. Polar residues predominate over residues 428-443 (GPQSLSGKSTPSSGDV). Residues S431, S433, and S436 each carry the phosphoserine modification. Residue T437 is modified to Phosphothreonine. Position 440 is a phosphoserine (S440).

This sequence belongs to the TFIIF alpha subunit family. Heterodimer of an alpha and a beta subunit. Interacts with GTF2F2, CTDP1, TAF6/TAFII80 and URI1. Interacts with GTF2B (via C-terminus and preferentially via acetylated form); this interaction prevents binding of GTF2B to GTF2F2. Part of TBP-based Pol II pre-initiation complex (PIC), in which Pol II core assembles with general transcription factors and other specific initiation factors including GTF2E1, GTF2E2, GTF2F1, GTF2F2, TCEA1, ERCC2, ERCC3, GTF2H2, GTF2H3, GTF2H4, GTF2H5, GTF2A1, GTF2A2, GTF2B and TBP; this large multi-subunit PIC complex mediates DNA unwinding and targets Pol II core to the transcription start site where the first phosphodiester bond forms. In terms of processing, phosphorylated on Ser and other residues by TAF1 and casein kinase II-like kinases.

Its subcellular location is the nucleus. In terms of biological role, TFIIF is a general transcription initiation factor that binds to RNA polymerase II and helps to recruit it to the initiation complex in collaboration with TFIIB. It promotes transcription elongation. The polypeptide is General transcription factor IIF subunit 1 (Gtf2f1) (Rattus norvegicus (Rat)).